Here is a 274-residue protein sequence, read N- to C-terminus: Shikimate kinase (274 aa).

86–96 (PVGKGLKSSSA) is an ATP binding site.

Belongs to the GHMP kinase family. Archaeal shikimate kinase subfamily.

It localises to the cytoplasm. The enzyme catalyses shikimate + ATP = 3-phosphoshikimate + ADP + H(+). Its pathway is metabolic intermediate biosynthesis; chorismate biosynthesis; chorismate from D-erythrose 4-phosphate and phosphoenolpyruvate: step 5/7. The chain is Shikimate kinase (aroK) from Pyrococcus abyssi (strain GE5 / Orsay).